The sequence spans 265 residues: 5'-nucleotidase SurE (265 aa).

4 residues coordinate a divalent metal cation: aspartate 8, aspartate 9, serine 39, and asparagine 96.

Belongs to the SurE nucleotidase family. The cofactor is a divalent metal cation.

It localises to the cytoplasm. It catalyses the reaction a ribonucleoside 5'-phosphate + H2O = a ribonucleoside + phosphate. Nucleotidase that shows phosphatase activity on nucleoside 5'-monophosphates. The protein is 5'-nucleotidase SurE of Dehalococcoides mccartyi (strain CBDB1).